The sequence spans 234 residues: Phosphoribosylaminoimidazole-succinocarboxamide synthase (234 aa).

This sequence belongs to the SAICAR synthetase family.

The catalysed reaction is 5-amino-1-(5-phospho-D-ribosyl)imidazole-4-carboxylate + L-aspartate + ATP = (2S)-2-[5-amino-1-(5-phospho-beta-D-ribosyl)imidazole-4-carboxamido]succinate + ADP + phosphate + 2 H(+). The protein operates within purine metabolism; IMP biosynthesis via de novo pathway; 5-amino-1-(5-phospho-D-ribosyl)imidazole-4-carboxamide from 5-amino-1-(5-phospho-D-ribosyl)imidazole-4-carboxylate: step 1/2. The sequence is that of Phosphoribosylaminoimidazole-succinocarboxamide synthase from Staphylococcus epidermidis (strain ATCC 35984 / DSM 28319 / BCRC 17069 / CCUG 31568 / BM 3577 / RP62A).